Consider the following 363-residue polypeptide: Ankyrin repeat domain-containing protein 40 (363 aa).

Position 1 is an N-acetylmethionine (Met1). ANK repeat units follow at residues 9-38 and 43-72; these read EQQERLREAAALGDIREVQKLVESGVDVNS and NGWTCLHWACKRNHGQVVSYLLQSGADREI. Residues 135–167 form a disordered region; it reads DSTQLQNGGPSPPPVSPPADSSPPLLPPTETPL. Residues 144–164 are compositionally biased toward pro residues; sequence PSPPPVSPPADSSPPLLPPTE. Ser176 is subject to Phosphoserine.

This chain is Ankyrin repeat domain-containing protein 40 (Ankrd40), found in Mus musculus (Mouse).